The chain runs to 67 residues: uncharacterized protein (67 aa).

This is an uncharacterized protein from Escherichia coli (Bacteriophage T4).